The sequence spans 20 residues: Implantin (20 aa).

It belongs to the EF-1-beta/EF-1-delta family. In terms of processing, phosphorylated. Uterus and embryo.

The protein resides in the cytoplasm. Its subcellular location is the nucleus. Its function is as follows. Binds DNA. The chain is Implantin from Mus musculus (Mouse).